Consider the following 507-residue polypeptide: Keratin, type II cuticular Hb5 (507 aa).

Residues 1 to 123 (MSCRSYRISP…PNAQCVKYEE (123 aa)) form a head region. The 312-residue stretch at 123 to 434 (EKEQIKCLNS…RLLEGEEQRL (312 aa)) folds into the IF rod domain. The interval 124–158 (KEQIKCLNSKFAAFIDKVRFLEQQNKLLETKWQFY) is coil 1A. The tract at residues 159–168 (QNRKCCESNL) is linker 1. The tract at residues 169–269 (EPLFGGYIEA…YEEEVCVLQA (101 aa)) is coil 1B. Lysine 229 participates in a covalent cross-link: Glycyl lysine isopeptide (Lys-Gly) (interchain with G-Cter in SUMO1). The tract at residues 270-286 (HISDTSVIVKMDNSRDL) is linker 12. The coil 2 stretch occupies residues 287-430 (NMDCVVAEIK…ATYRRLLEGE (144 aa)). The interval 431–507 (EQRLCEGVGS…CGSSRSVRFA (77 aa)) is tail.

The protein belongs to the intermediate filament family. Heterotetramer of two type I and two type II keratins.

This chain is Keratin, type II cuticular Hb5 (Krt85), found in Mus musculus (Mouse).